The sequence spans 350 residues: GTPase Obg (350 aa).

In terms of domain architecture, Obg spans 1-159 (MKLVDEAEIL…RLLKLELKLL (159 aa)). The region spanning 160–337 (ADVGLLGFPN…IMKDVMAFFD (178 aa)) is the OBG-type G domain. Residues 166 to 173 (GFPNAGKS), 191 to 195 (FTTLY), 213 to 216 (DVPG), 287 to 290 (NKAD), and 318 to 320 (SAL) each bind GTP. Residues serine 173 and threonine 193 each contribute to the Mg(2+) site.

Belongs to the TRAFAC class OBG-HflX-like GTPase superfamily. OBG GTPase family. As to quaternary structure, monomer. Mg(2+) is required as a cofactor.

Its subcellular location is the cytoplasm. Its function is as follows. An essential GTPase which binds GTP, GDP and possibly (p)ppGpp with moderate affinity, with high nucleotide exchange rates and a fairly low GTP hydrolysis rate. Plays a role in control of the cell cycle, stress response, ribosome biogenesis and in those bacteria that undergo differentiation, in morphogenesis control. The sequence is that of GTPase Obg from Xanthomonas campestris pv. campestris (strain 8004).